A 187-amino-acid polypeptide reads, in one-letter code: Elongation factor P (187 aa).

It belongs to the elongation factor P family.

The protein resides in the cytoplasm. It functions in the pathway protein biosynthesis; polypeptide chain elongation. Its function is as follows. Involved in peptide bond synthesis. Stimulates efficient translation and peptide-bond synthesis on native or reconstituted 70S ribosomes in vitro. Probably functions indirectly by altering the affinity of the ribosome for aminoacyl-tRNA, thus increasing their reactivity as acceptors for peptidyl transferase. In Desulforapulum autotrophicum (strain ATCC 43914 / DSM 3382 / VKM B-1955 / HRM2) (Desulfobacterium autotrophicum), this protein is Elongation factor P.